Consider the following 545-residue polypeptide: Degenerin-like protein asic-2 (545 aa).

Residues 1–34 lie on the Cytoplasmic side of the membrane; sequence MRGGGFVQIFKDFSNWSTVAVVPHVANANNKISR. The helical transmembrane segment at 35–55 threads the bilayer; it reads IFWIAIFLFVLGMFAYELYIL. Residues 56–457 are Extracellular-facing; that stretch reads IAKFFSYPAT…NVINDLGGQA (402 aa). A disulfide bridge links Cys83 with Cys191. Asn201 carries an N-linked (GlcNAc...) asparagine glycan. 5 disulfides stabilise this stretch: Cys284–Cys370, Cys305–Cys366, Cys309–Cys364, Cys318–Cys343, and Cys320–Cys334. An N-linked (GlcNAc...) asparagine glycan is attached at Asn350. A helical transmembrane segment spans residues 458–478; the sequence is GLWLGLSVISVVEMTGLMLVM. Positions 462–464 match the GAS motif; ion selectivity filter motif; the sequence is GLS. Residues 479–545 are Cytoplasmic-facing; that stretch reads GAFCVTGGAI…NKGDEEKKKK (67 aa). 2 stretches are compositionally biased toward basic and acidic residues: residues 514–523 and 534–545; these read DHLEKKHGEM and IENKGDEEKKKK. Residues 514 to 545 form a disordered region; sequence DHLEKKHGEMESGSDGEVDDIENKGDEEKKKK.

Belongs to the amiloride-sensitive sodium channel (TC 1.A.6) family. Can form homotrimers. Heterotrimer; forms functional heterotrimers producing channel with different properties.

Its subcellular location is the cell membrane. It catalyses the reaction Na(+)(in) = Na(+)(out). Inhibited by the diuretic drug amiloride. Its function is as follows. Could form pH-gated heterotrimeric sodium channels that act as postsynaptic excitatory sensors in the nervous system, generating rapid, transient inward currents that fully desensitize upon extracellular acidification. In Caenorhabditis elegans, this protein is Degenerin-like protein asic-2 (asic-2).